Reading from the N-terminus, the 143-residue chain is Acyl carrier protein 3, chloroplastic (143 aa).

Residues 1–60 (MATAAAGSSLICIKSASCSLNRAQVPSGLSSLRSVSLPISGKIFPSLRSSRGPLSFRVCC) constitute a chloroplast transit peptide. In terms of domain architecture, Carrier spans 64–139 (QETVTRVCEI…DAADLIEKLV (76 aa)). S99 carries the post-translational modification O-(pantetheine 4'-phosphoryl)serine.

Belongs to the acyl carrier protein (ACP) family. Post-translationally, 4'-phosphopantetheine is transferred from CoA to a specific serine of apo-ACP by acpS. This modification is essential for activity because fatty acids are bound in thioester linkage to the sulfhydryl of the prosthetic group.

It localises to the plastid. The protein resides in the chloroplast. Its pathway is lipid metabolism; fatty acid biosynthesis. In terms of biological role, carrier of the growing fatty acid chain in fatty acid biosynthesis. This is Acyl carrier protein 3, chloroplastic (ACL1.3) from Cuphea lanceolata (Cigar flower).